The chain runs to 289 residues: Enoyl-CoA delta isomerase 1, mitochondrial (289 aa).

The N-terminal 28 residues, 1 to 28 (MALAAARRLLLHAGSRLGRREAVDGARR), are a transit peptide targeting the mitochondrion. Residue K48 is modified to N6-acetyllysine; alternate. Residue K48 is modified to N6-succinyllysine; alternate. K71 carries the post-translational modification N6-succinyllysine. K76 bears the N6-acetyllysine mark. Residues 93–97 (AGLDL), G140, and N164 each bind substrate. 4 positions are modified to N6-acetyllysine; alternate: K222, K229, K255, and K270. N6-succinyllysine; alternate occurs at positions 222, 229, 255, and 270. Position 275 is an N6-succinyllysine (K275). An N6-acetyllysine; alternate modification is found at K283. At K283 the chain carries N6-succinyllysine; alternate.

It belongs to the enoyl-CoA hydratase/isomerase family. In terms of assembly, homotrimer.

Its subcellular location is the mitochondrion matrix. It catalyses the reaction a (3Z)-enoyl-CoA = a 4-saturated (2E)-enoyl-CoA. It carries out the reaction a (3E)-enoyl-CoA = a 4-saturated (2E)-enoyl-CoA. The catalysed reaction is (3Z)-octenoyl-CoA = (2E)-octenoyl-CoA. The enzyme catalyses (2E)-tetradecenoyl-CoA = (3Z)-tetradecenoyl-CoA. It catalyses the reaction (3Z)-dodecenoyl-CoA = (2E)-dodecenoyl-CoA. It carries out the reaction (3Z)-hexenoyl-CoA = (2E)-hexenoyl-CoA. The catalysed reaction is (3Z)-decenoyl-CoA = (2E)-decenoyl-CoA. The protein operates within lipid metabolism; fatty acid beta-oxidation. Its function is as follows. Key enzyme of fatty acid beta-oxidation. Able to isomerize both 3-cis (3Z) and 3-trans (3E) double bonds into the 2-trans (2E) form in a range of enoyl-CoA species, with a preference for (3Z)-enoyl-CoAs over (3E)-enoyl-CoAs. The catalytic efficiency of this enzyme is not affected by the fatty acyl chain length. This is Enoyl-CoA delta isomerase 1, mitochondrial from Mus musculus (Mouse).